A 270-amino-acid chain; its full sequence is MNETIEPLNPIAFQLGPIAVHWYGIIIGLGALLGLWLAVREGERRGLHKDTFVDLVLFAIPIAILCARAYYVIFQWGYYSEHPDQIIQIWNGGLAIHGGLIGAVLTGIIYAKVKGLSFWKLADIAAPSILLGQAIGRWGNFMNQEAHGEAVSRAFLENLHLPDFIINQMYIDGQYYQPTFLYESLWSFTGVVVLLLLRKANLKRGELFLIYVIWYSMGRYFIEGLRTDSLMLTENLRIAQVISIVLILCAAALIAYRRFKGREIKRYQEM.

The next 4 membrane-spanning stretches (helical) occupy residues 18–38 (IAVH…LWLA), 55–75 (LVLF…VIFQ), 89–109 (IWNG…TGII), and 115–135 (GLSF…GQAI). Arg137 is a binding site for a 1,2-diacyl-sn-glycero-3-phospho-(1'-sn-glycerol). The next 3 helical transmembrane spans lie at 177 to 197 (QPTF…LLLL), 205 to 225 (GELF…IEGL), and 236 to 256 (LRIA…LIAY).

This sequence belongs to the Lgt family.

It is found in the cell membrane. The catalysed reaction is L-cysteinyl-[prolipoprotein] + a 1,2-diacyl-sn-glycero-3-phospho-(1'-sn-glycerol) = an S-1,2-diacyl-sn-glyceryl-L-cysteinyl-[prolipoprotein] + sn-glycerol 1-phosphate + H(+). It participates in protein modification; lipoprotein biosynthesis (diacylglyceryl transfer). Its function is as follows. Catalyzes the transfer of the diacylglyceryl group from phosphatidylglycerol to the sulfhydryl group of the N-terminal cysteine of a prolipoprotein, the first step in the formation of mature lipoproteins. In Bacillus licheniformis (strain ATCC 14580 / DSM 13 / JCM 2505 / CCUG 7422 / NBRC 12200 / NCIMB 9375 / NCTC 10341 / NRRL NRS-1264 / Gibson 46), this protein is Phosphatidylglycerol--prolipoprotein diacylglyceryl transferase.